The following is an 881-amino-acid chain: Phosphoenolpyruvate carboxylase (881 aa).

Residues histidine 139 and lysine 544 contribute to the active site.

Belongs to the PEPCase type 1 family. Mg(2+) is required as a cofactor.

The enzyme catalyses oxaloacetate + phosphate = phosphoenolpyruvate + hydrogencarbonate. In terms of biological role, forms oxaloacetate, a four-carbon dicarboxylic acid source for the tricarboxylic acid cycle. The chain is Phosphoenolpyruvate carboxylase from Marinobacter nauticus (strain ATCC 700491 / DSM 11845 / VT8) (Marinobacter aquaeolei).